A 682-amino-acid polypeptide reads, in one-letter code: MSRNQLALFDAALMRVALLDALKKLDPRTQVRNPVMFVVWLGSVVTTLLAVAMAAGKTPGDTGFTVAISVWLWFTVLFANFAEALAEGRSKAQANSLKGVTKTSFAKKLNEAKYGTSHYPVAADTLRKGDWVLVEAGDIIPCDGEVLEGGASVDESAITGESAPVIRESGGDFSSVTGGTRILSDWLVVQCSVNPGETFLDRMIAMVEGATRRKTPNEIALTILLLALTIVLLLATVTLWPFSAWGGNPVSITVLVALLVCLIPTTIGGLLSAIGVAGMSRMLGANVIATSGRAVEAAGDVDVLLLDKTGTITLGNRQATQFLPAAGVSEEQLADAAQLASLADETPEGRSIVVLAKQKFNLRERDLNSMGATFIPFSAQTRMSGVNVQQRAIRKGAADAVRRYIDSNGGQFPGEVNSLVDRVARAGGTPLVVSDGNRVMGVVALKDIVKGGIKERFAELRKMGIKTVMITGDNPLTAAAIAAEAGVDDFLSEATPEAKLALIRQYQAEGRLVAMTGDGTNDAPALAQADVAVAMNSGTQAAKEAGNMVDLDSNPTKLLEVVHIGKQMLMTRGSLTTFSIANDVAKYFAILPAAFAATYPQLNQLNVMGLHSPASAILSAVIFNALVIVFLIPLALKGVSYRALSAAALLRRNLWIYGVGGLLVPFLGIKLIDMLLTVTGLA.

4 helical membrane passes run 35–55 (VMFVVWLGSVVTTLLAVAMAA), 62–82 (TGFTVAISVWLWFTVLFANFA), 219–239 (IALTILLLALTIVLLLATVTL), and 254–274 (VLVALLVCLIPTTIGGLLSAI). Aspartate 307 (4-aspartylphosphate intermediate) is an active-site residue. Residues aspartate 344, glutamate 348, 377-384 (FSAQTRMS), and lysine 395 each bind ATP. Mg(2+) contacts are provided by aspartate 518 and aspartate 522. The next 3 helical transmembrane spans lie at 577–597 (TFSIANDVAKYFAILPAAFAA), 616–636 (AILSAVIFNALVIVFLIPLAL), and 656–676 (IYGVGGLLVPFLGIKLIDMLL).

This sequence belongs to the cation transport ATPase (P-type) (TC 3.A.3) family. Type IA subfamily. The system is composed of three essential subunits: KdpA, KdpB and KdpC.

It is found in the cell inner membrane. It carries out the reaction K(+)(out) + ATP + H2O = K(+)(in) + ADP + phosphate + H(+). In terms of biological role, part of the high-affinity ATP-driven potassium transport (or Kdp) system, which catalyzes the hydrolysis of ATP coupled with the electrogenic transport of potassium into the cytoplasm. This subunit is responsible for energy coupling to the transport system and for the release of the potassium ions to the cytoplasm. The protein is Potassium-transporting ATPase ATP-binding subunit of Erwinia tasmaniensis (strain DSM 17950 / CFBP 7177 / CIP 109463 / NCPPB 4357 / Et1/99).